Reading from the N-terminus, the 371-residue chain is Putative 8-amino-7-oxononanoate synthase (371 aa).

A substrate-binding site is contributed by R21. 108-109 (GY) is a binding site for pyridoxal 5'-phosphate. H133 serves as a coordination point for substrate. Residues S180, 205–208 (DDAH), and 234–237 (TLSK) contribute to the pyridoxal 5'-phosphate site. Position 237 is an N6-(pyridoxal phosphate)lysine (K237). Residue T333 participates in substrate binding.

This sequence belongs to the class-II pyridoxal-phosphate-dependent aminotransferase family. BioF subfamily. As to quaternary structure, homodimer. Pyridoxal 5'-phosphate serves as cofactor.

It carries out the reaction 6-carboxyhexanoyl-[ACP] + L-alanine + H(+) = (8S)-8-amino-7-oxononanoate + holo-[ACP] + CO2. The protein operates within cofactor biosynthesis; biotin biosynthesis. In terms of biological role, catalyzes the decarboxylative condensation of pimeloyl-[acyl-carrier protein] and L-alanine to produce 8-amino-7-oxononanoate (AON), [acyl-carrier protein], and carbon dioxide. The sequence is that of Putative 8-amino-7-oxononanoate synthase (bioF) from Bacillus subtilis subsp. natto.